Here is a 332-residue protein sequence, read N- to C-terminus: MEPFKHPIAILGAGSWGTALALVLARKGQKVRLWSYESDHVDEMQAEGVNNRYLPNYPFPETLKAYCDLKASLEGVTDILIVVPSFAFHEVITRMKPLIDAKTRIAWGTKGLAKGSRLLHEVVATELGQVPMAVISGPSLATEVAANLPTAVSLASNNSQFSKDLIERLHGQRFRVYKNDDMIGVELCGSVKNILAIATGISDGLKLGSNARAALITRGLTEMGRLVSVFGGKQETLTGLAGLGDLVLTCTDNQSRNRRFGLALGEGVDKKEAQQSIGQAIEGLYNTDQVHALAQKHAIEMPLTFQVHRILHEDLDPQQAVQELLERSPKAE.

NADPH contacts are provided by Ser15, Trp16, and Lys110. 3 residues coordinate sn-glycerol 3-phosphate: Lys110, Gly137, and Ser139. Ala141 is an NADPH binding site. Sn-glycerol 3-phosphate is bound by residues Lys192, Asp245, Ser255, Arg256, and Asn257. The Proton acceptor role is filled by Lys192. Arg256 contacts NADPH. Glu282 contributes to the NADPH binding site.

It belongs to the NAD-dependent glycerol-3-phosphate dehydrogenase family.

It is found in the cytoplasm. The catalysed reaction is sn-glycerol 3-phosphate + NAD(+) = dihydroxyacetone phosphate + NADH + H(+). The enzyme catalyses sn-glycerol 3-phosphate + NADP(+) = dihydroxyacetone phosphate + NADPH + H(+). Its pathway is membrane lipid metabolism; glycerophospholipid metabolism. Its function is as follows. Catalyzes the reduction of the glycolytic intermediate dihydroxyacetone phosphate (DHAP) to sn-glycerol 3-phosphate (G3P), the key precursor for phospholipid synthesis. The polypeptide is Glycerol-3-phosphate dehydrogenase [NAD(P)+] (Coxiella burnetii (strain RSA 331 / Henzerling II)).